The chain runs to 325 residues: Tagatose 1,6-diphosphate aldolase (325 aa).

Belongs to the aldolase LacD family.

The enzyme catalyses D-tagatofuranose 1,6-bisphosphate = D-glyceraldehyde 3-phosphate + dihydroxyacetone phosphate. Its pathway is carbohydrate metabolism; D-tagatose 6-phosphate degradation; D-glyceraldehyde 3-phosphate and glycerone phosphate from D-tagatose 6-phosphate: step 2/2. The sequence is that of Tagatose 1,6-diphosphate aldolase from Staphylococcus haemolyticus (strain JCSC1435).